The sequence spans 410 residues: Putative competence-damage inducible protein (410 aa).

This sequence belongs to the CinA family.

The polypeptide is Putative competence-damage inducible protein (Clostridium kluyveri (strain NBRC 12016)).